We begin with the raw amino-acid sequence, 402 residues long: 4-hydroxy-3-methylbut-2-enyl diphosphate reductase (402 aa).

A [4Fe-4S] cluster-binding site is contributed by Cys-66. His-96 is a binding site for (2E)-4-hydroxy-3-methylbut-2-enyl diphosphate. His-96 serves as a coordination point for dimethylallyl diphosphate. His-96 is an isopentenyl diphosphate binding site. Cys-157 is a [4Fe-4S] cluster binding site. Position 185 (His-185) interacts with (2E)-4-hydroxy-3-methylbut-2-enyl diphosphate. His-185 lines the dimethylallyl diphosphate pocket. Residue His-185 participates in isopentenyl diphosphate binding. Glu-187 acts as the Proton donor in catalysis. Thr-250 is a binding site for (2E)-4-hydroxy-3-methylbut-2-enyl diphosphate. Cys-288 provides a ligand contact to [4Fe-4S] cluster. (2E)-4-hydroxy-3-methylbut-2-enyl diphosphate contacts are provided by Ser-317, Ser-318, Asn-319, and Ser-379. Ser-317, Ser-318, Asn-319, and Ser-379 together coordinate dimethylallyl diphosphate. Isopentenyl diphosphate contacts are provided by Ser-317, Ser-318, Asn-319, and Ser-379.

This sequence belongs to the IspH family. The cofactor is [4Fe-4S] cluster.

The enzyme catalyses isopentenyl diphosphate + 2 oxidized [2Fe-2S]-[ferredoxin] + H2O = (2E)-4-hydroxy-3-methylbut-2-enyl diphosphate + 2 reduced [2Fe-2S]-[ferredoxin] + 2 H(+). It catalyses the reaction dimethylallyl diphosphate + 2 oxidized [2Fe-2S]-[ferredoxin] + H2O = (2E)-4-hydroxy-3-methylbut-2-enyl diphosphate + 2 reduced [2Fe-2S]-[ferredoxin] + 2 H(+). Its pathway is isoprenoid biosynthesis; dimethylallyl diphosphate biosynthesis; dimethylallyl diphosphate from (2E)-4-hydroxy-3-methylbutenyl diphosphate: step 1/1. The protein operates within isoprenoid biosynthesis; isopentenyl diphosphate biosynthesis via DXP pathway; isopentenyl diphosphate from 1-deoxy-D-xylulose 5-phosphate: step 6/6. In terms of biological role, catalyzes the conversion of 1-hydroxy-2-methyl-2-(E)-butenyl 4-diphosphate (HMBPP) into a mixture of isopentenyl diphosphate (IPP) and dimethylallyl diphosphate (DMAPP). Acts in the terminal step of the DOXP/MEP pathway for isoprenoid precursor biosynthesis. The protein is 4-hydroxy-3-methylbut-2-enyl diphosphate reductase of Microcystis aeruginosa (strain NIES-843 / IAM M-2473).